Consider the following 3948-residue polypeptide: Equisetin synthetase eqxS (3948 aa).

The Ketosynthase family 3 (KS3) domain occupies 4–438 (SEPIAVIGSA…GTNAHAIIEA (435 aa)). Catalysis depends on for beta-ketoacyl synthase activity residues cysteine 177, histidine 316, and histidine 358. The interval 543–847 (IFTGQGTQWP…DTIEAISEGR (305 aa)) is malonyl-CoA:ACP transacylase (MAT) domain. Positions 931–1066 (HPLLGRRCHD…AQIKASLGAP (136 aa)) are N-terminal hotdog fold. The dehydratase (DH) domain stretch occupies residues 931-1233 (HPLLGRRCHD…MELVPFSPAT (303 aa)). Residues 931–1235 (HPLLGRRCHD…LVPFSPATPA (305 aa)) form the PKS/mFAS DH domain. The active-site Proton acceptor; for dehydratase activity is histidine 964. Positions 1081-1235 (LRPVSVDRFY…LVPFSPATPA (155 aa)) are C-terminal hotdog fold. The active-site Proton donor; for dehydratase activity is the aspartate 1141. Residues 1376–1574 (MLQDVYEQGF…GIDTTTPPVH (199 aa)) are methyltransferase (MT) domain. Positions 2105-2277 (TFLLVGLTGE…VAASSIDISS (173 aa)) are ketoreductase (KR) domain. The Carrier 1 domain maps to 2389–2464 (AIIKESFIVR…DLVDECLDLL (76 aa)). Serine 2424 is subject to O-(pantetheine 4'-phosphoryl)serine. A disordered region spans residues 2480–2553 (QAAKPTTVIP…NSTDILAPPR (74 aa)). 2 stretches are compositionally biased toward polar residues: residues 2487 to 2505 (VIPQ…QGTS) and 2513 to 2528 (GSDS…LTSW). Positions 2529-2541 (DRQDSSPPDKSDD) are enriched in basic and acidic residues. The segment at 2564–2991 (SYGQAGFWFL…IRGSDKTVDA (428 aa)) is condensation (C) domain. Residues 3026 to 3424 (QVIQDNPDNI…DGLLFCDGRL (399 aa)) form an adenylation (A) (KR) domain region. One can recognise a Carrier 2 domain in the interval 3540–3617 (EILTPSEQRL…AMAGVLEDCG (78 aa)). Residue serine 3577 is modified to O-(pantetheine 4'-phosphoryl)serine. The segment at 3653–3870 (LTGSSGYLGR…MPVNEVVEAI (218 aa)) is reductase (RED) domain.

It in the C-terminal section; belongs to the NRP synthetase family.

It catalyses the reaction L-serine + 7 malonyl-CoA + acetyl-CoA + 2 S-adenosyl-L-methionine + ATP + 8 NADPH + 11 H(+) = (5S)-3-[(2E,6R,8E,10E,12E)-2,6-dimethyltetradeca-2,8,10,12-tetraenoyl]-5-(hydroxymethyl)pyrrolidine-2,4-dione + AMP + 2 S-adenosyl-L-homocysteine + 7 CO2 + diphosphate + 8 NADP(+) + 8 CoA + 6 H2O. It participates in mycotoxin biosynthesis. Hybrid PKS-NRPS synthetase; part of the gene cluster that mediates the biosynthesis of equisetin, a trans-fused decalin-containing tetramic acid with antimicrobial activity. The PKS module of eqxS together with the enoylreductase eqxC catalyze the formation of the polyketide unit which is then conjugated to L-serine by the condensation domain of the eqxS NRPS module. Activity of the Dieckmann cyclase domain (RED) results in release of the Dieckmann product intermediate. Diels-Alderase eqx3 is involved in endo-selective Diels-Alder cycloaddition to form the decalin ring, leading to the production of N-desmethylequisetin also called trichosetin. Subsequent N-methylation is carried out by eqxD to give equisetin. This Fusarium heterosporum protein is Equisetin synthetase eqxS.